The chain runs to 133 residues: ATP synthase epsilon chain (133 aa).

The protein belongs to the ATPase epsilon chain family. As to quaternary structure, F-type ATPases have 2 components, CF(1) - the catalytic core - and CF(0) - the membrane proton channel. CF(1) has five subunits: alpha(3), beta(3), gamma(1), delta(1), epsilon(1). CF(0) has three main subunits: a, b and c.

It is found in the cell membrane. Produces ATP from ADP in the presence of a proton gradient across the membrane. The protein is ATP synthase epsilon chain of Clostridium perfringens (strain ATCC 13124 / DSM 756 / JCM 1290 / NCIMB 6125 / NCTC 8237 / Type A).